Consider the following 215-residue polypeptide: BAG family molecular chaperone regulator 5, mitochondrial (215 aa).

The transit peptide at 1 to 14 (MKRSRKFSSSTTTT) directs the protein to the mitochondrion. Residues 50 to 79 (ATAAAARIQSGYRSYRIRNLYKKISSINRE) form the IQ domain. The 78-residue stretch at 72-149 (KISSINREAN…GMQEILDSIS (78 aa)) folds into the BAG domain.

As to quaternary structure, binds to the ATPase domain of HSP70/HSC70 chaperones. Interacts with HSP70-1.

The protein localises to the mitochondrion. Functionally, co-chaperone that regulates diverse cellular pathways, such as programmed cell death and stress responses. The protein is BAG family molecular chaperone regulator 5, mitochondrial (BAG5) of Arabidopsis thaliana (Mouse-ear cress).